Reading from the N-terminus, the 530-residue chain is MNLDAWLDIQPAKKLYTIKEASRILTKKFGKEIKEHNISYLVQYGRVNKYKIKNRVYVDIDEVENYYKKLFFEKRKEWEEKLGFKLDWDLAFDLLSEKERTKHVHGIHPYKGKFIPQLVEYFLKRHFNVGDIIIDPFMGSGTTLVQCMEMGINSIGIDISPFNCLIAEVKLQKYDIQKLKKILLDMLNKTKEFSKNLGDDEFVKEMDKLIEKYNKKYFTLEYKRKLSKKEIDEDSYSEKIMEMFYLEYKKLKEKYCKNDDEFDDIFKDKPFLYKWYSPRIRAELNFYLNLIKDCRDETIKKVAMIILSRTARSVRGTTHFDLATLKEPVFDPYYCYKHKKICRPVQTILRHLEEYTNDVISRIEEFSKIRKDAYYLIINGDSRTVDIEEELKKHPNFYELYKNKKIDGIFTSPPYLGQIDYHEQHAYAYELFDIPRLDELEIGPKFKGSSKKAQKEYIEGISDVLINMKRFLNEDAKIFIVVNDKKNLYKEIFEKSGLILVREFKRPVLNRTERDRNPYYESIFELKMEE.

It belongs to the N(4)/N(6)-methyltransferase family. N(4) subfamily.

The enzyme catalyses a 2'-deoxycytidine in DNA + S-adenosyl-L-methionine = an N(4)-methyl-2'-deoxycytidine in DNA + S-adenosyl-L-homocysteine + H(+). Its function is as follows. An alpha subtype methylase that recognizes the double-stranded sequence 5'-GGNCC-3', methylates C-5 on both strands, and protects the DNA from cleavage by the MjaII endonuclease. This Methanocaldococcus jannaschii (strain ATCC 43067 / DSM 2661 / JAL-1 / JCM 10045 / NBRC 100440) (Methanococcus jannaschii) protein is Type II methyltransferase M.MjaII (mjaIIM).